A 393-amino-acid polypeptide reads, in one-letter code: tRNA(Met) cytidine acetate ligase (393 aa).

Residues G81, N142, and R167 each contribute to the ATP site.

This sequence belongs to the TmcAL family.

The protein localises to the cytoplasm. The catalysed reaction is cytidine(34) in elongator tRNA(Met) + acetate + ATP = N(4)-acetylcytidine(34) in elongator tRNA(Met) + AMP + diphosphate. In terms of biological role, catalyzes the formation of N(4)-acetylcytidine (ac(4)C) at the wobble position of elongator tRNA(Met), using acetate and ATP as substrates. First activates an acetate ion to form acetyladenylate (Ac-AMP) and then transfers the acetyl group to tRNA to form ac(4)C34. The polypeptide is tRNA(Met) cytidine acetate ligase (Bacillus cereus (strain AH820)).